Consider the following 932-residue polypeptide: MRVPAQATIAVLASAVSSPLNDPQIYDLGKLGWTLSSPALNRTVPGHLPSQVHLDLLRAGVIDDPYHDLNDFNLRWIADANWTYTSDPIRGLGNNTHSTWLVFEGLDTFATIKYCDKQIASTNNQFRQYAFDISEAVKDCTADPVLSLNFGSAPKIVDQIAADPASPQWPFGIQQSYEYPNRWFMRKEQSDFGWDWGPAFAPAGPWKPAYLVQLSSEQNVHVLNTDLDIYRQGQINYLPPDQTQPWVLNASIDFFGSLPSNSSMSIAISETNSGAELTTQSLRNITILNGSITGVAVLKDASPKLWWPYGLGEQNLYNVTITVSDGVRSLARVTKRTGFRTIFLNQRNITDTEIAQGVAPGAHWNFEVNGHEFYAKGSNLIPPDAFWARVTTTKMARLFDSVVAANQNMLRVWSSGAYLPDFMYDLADERGVLLWSEFEFSDAMYPVDKAFLDNVAAEVVYNVRRVNHHPSLALWAGGNEIESLILPTIERSYPDQYAKYVGDYETLYINLILPLVYENTHSITYSPSSTTEGYLDVNLSAKIVMAERYQNLTEGHYYGDTDYYNYDTSVAFDFSQYPVGRFANEFGFHSMPSLQSWQQAVDPEDLHFNSSVIMLRNHHYPAGNLSTHNFHNTSMGMGETTMGVMNYYPVPDKTDPIANFSAWCHATQLFQADFYKSQIQFYRRGSGMPERQLGSLYWQLEDIWQAPSWAGIEYDGRWKVLHYVARDIYQPVIVSPFWNSTTRRLDVYVTSDLWEPVSGTVDLAWMDLSGKPIAQNARTPKTAAFVVGALNTTKIYSMNINERALPDPKNSVLILSVQAEGHLPNSNKKSTLTHQGHFTPVFPKDLMLVDPHLELRYNAKTLTFTVQAKAGVSLYTWLDYPAGVVGYFEDNGFVLVPGQKRDIRFVMQEDKTDGNWVQDVTVRSLWDQTTKT.

The N-terminal stretch at 1–19 (MRVPAQATIAVLASAVSSP) is a signal peptide. Residues asparagine 41, asparagine 81, asparagine 94, asparagine 249, asparagine 261, asparagine 284, asparagine 289, asparagine 318, and asparagine 348 are each glycosylated (N-linked (GlcNAc...) asparagine). Glutamate 480 functions as the Proton donor in the catalytic mechanism. Residues asparagine 538, asparagine 551, asparagine 609, asparagine 624, asparagine 632, asparagine 659, asparagine 739, and asparagine 791 are each glycosylated (N-linked (GlcNAc...) asparagine).

The protein belongs to the glycosyl hydrolase 2 family. Beta-mannosidase A subfamily. In terms of assembly, homodimer.

The protein localises to the secreted. The catalysed reaction is Hydrolysis of terminal, non-reducing beta-D-mannose residues in beta-D-mannosides.. The protein operates within glycan metabolism; N-glycan degradation. In terms of biological role, exoglycosidase that cleaves the single beta-linked mannose residue from the non-reducing end of beta-mannosidic oligosaccharides of various complexity and length. Involved in the degradation of polymeric mannan and galactomannan. This chain is Beta-mannosidase A (mndA), found in Aspergillus terreus (strain NIH 2624 / FGSC A1156).